The following is a 247-amino-acid chain: tRNA (guanine-N(1)-)-methyltransferase (247 aa).

Residues glycine 116 and 135–140 (IGDYVL) contribute to the S-adenosyl-L-methionine site.

It belongs to the RNA methyltransferase TrmD family. As to quaternary structure, homodimer.

The protein localises to the cytoplasm. It carries out the reaction guanosine(37) in tRNA + S-adenosyl-L-methionine = N(1)-methylguanosine(37) in tRNA + S-adenosyl-L-homocysteine + H(+). Its function is as follows. Specifically methylates guanosine-37 in various tRNAs. This chain is tRNA (guanine-N(1)-)-methyltransferase, found in Symbiobacterium thermophilum (strain DSM 24528 / JCM 14929 / IAM 14863 / T).